Reading from the N-terminus, the 648-residue chain is 1-deoxy-D-xylulose-5-phosphate synthase (648 aa).

Residues His-74 and 115–117 each bind thiamine diphosphate; that span reads GHA. Asp-146 provides a ligand contact to Mg(2+). Residues 147 to 148, Asn-176, Tyr-292, and Glu-375 each bind thiamine diphosphate; that span reads GA. Residue Asn-176 coordinates Mg(2+).

This sequence belongs to the transketolase family. DXPS subfamily. As to quaternary structure, homodimer. Requires Mg(2+) as cofactor. It depends on thiamine diphosphate as a cofactor.

It carries out the reaction D-glyceraldehyde 3-phosphate + pyruvate + H(+) = 1-deoxy-D-xylulose 5-phosphate + CO2. It participates in metabolic intermediate biosynthesis; 1-deoxy-D-xylulose 5-phosphate biosynthesis; 1-deoxy-D-xylulose 5-phosphate from D-glyceraldehyde 3-phosphate and pyruvate: step 1/1. Functionally, catalyzes the acyloin condensation reaction between C atoms 2 and 3 of pyruvate and glyceraldehyde 3-phosphate to yield 1-deoxy-D-xylulose-5-phosphate (DXP). In Synechococcus sp. (strain JA-2-3B'a(2-13)) (Cyanobacteria bacterium Yellowstone B-Prime), this protein is 1-deoxy-D-xylulose-5-phosphate synthase.